A 446-amino-acid chain; its full sequence is Na(+)/H(+) antiporter NhaA (446 aa).

A run of 11 helical transmembrane segments spans residues 23-43 (GGML…SPWG), 73-93 (LMTF…GLEI), 109-129 (LLPI…YYFM), 138-158 (GLAI…SLFG), 167-187 (VFLT…IALF), 193-213 (SVNY…GNFF), 219-239 (WFYI…GIHA), 314-334 (MVNY…SLTA), 348-368 (VLAG…WLVI), 381-401 (WVNL…SLFI), and 419-439 (GVIL…QFAL).

The protein belongs to the NhaA Na(+)/H(+) (TC 2.A.33) antiporter family.

It is found in the cell inner membrane. The enzyme catalyses Na(+)(in) + 2 H(+)(out) = Na(+)(out) + 2 H(+)(in). Na(+)/H(+) antiporter that extrudes sodium in exchange for external protons. In Phocaeicola vulgatus (strain ATCC 8482 / DSM 1447 / JCM 5826 / CCUG 4940 / NBRC 14291 / NCTC 11154) (Bacteroides vulgatus), this protein is Na(+)/H(+) antiporter NhaA.